The chain runs to 250 residues: tRNA (guanine-N(7)-)-methyltransferase (250 aa).

S-adenosyl-L-methionine is bound by residues Glu86, Glu111, Asp138, and Asp161. The active site involves Asp161. Substrate is bound by residues Lys165, Asp197, and 229–232 (TEFE).

Belongs to the class I-like SAM-binding methyltransferase superfamily. TrmB family.

The enzyme catalyses guanosine(46) in tRNA + S-adenosyl-L-methionine = N(7)-methylguanosine(46) in tRNA + S-adenosyl-L-homocysteine. Its pathway is tRNA modification; N(7)-methylguanine-tRNA biosynthesis. Catalyzes the formation of N(7)-methylguanine at position 46 (m7G46) in tRNA. In Treponema pallidum (strain Nichols), this protein is tRNA (guanine-N(7)-)-methyltransferase.